A 428-amino-acid polypeptide reads, in one-letter code: Flotillin-1 (428 aa).

Residues serine 19, serine 163, and serine 385 each carry the phosphoserine modification. Phosphothreonine is present on threonine 387.

The protein belongs to the band 7/mec-2 family. Flotillin subfamily. In terms of assembly, heterooligomeric complex of flotillin-1 and flotillin-2 and caveolin-1 and caveolin-2. Interacts with ECPAS. High expression in brain, white adipose tissue, heart muscle, skeletal muscle and lung. Low expression in spleen, liver and testis.

The protein resides in the cell membrane. It is found in the endosome. The protein localises to the membrane. Its subcellular location is the caveola. It localises to the melanosome. The protein resides in the membrane raft. May act as a scaffolding protein within caveolar membranes, functionally participating in formation of caveolae or caveolae-like vesicles. This chain is Flotillin-1 (Flot1), found in Mus musculus (Mouse).